A 250-amino-acid chain; its full sequence is Mycofactocin precursor peptide peptidase (250 aa).

A divalent metal cation is bound by residues Glu38, His40, Asp49, His127, and Glu166.

Belongs to the creatininase superfamily. As to quaternary structure, homooctamer. Fe(2+) serves as cofactor. The cofactor is Zn(2+).

The catalysed reaction is [mycofactocin precursor peptide]-C-terminal glycyl-N-{5-[(4-hydroxyphenyl)methyl]-4,4-dimethyl-2-oxopyrrolidin-3-yl}acetamide + H2O = [mycofactocin precursor peptide]-C-terminal glycine + 3-amino-5-[(4-hydroxyphenyl)methyl]-4,4-dimethyl-2-pyrrolidin-2-one. Peptidase involved in the biosynthesis of the enzyme cofactor mycofactocin (MFT). Catalyzes cleavage of the MftC-modified MftA peptide to liberate its final two residues, which consist of a cross-linked valine-decarboxylated tyrosine dipeptide (named 3-amino-5-[(4-hydroxyphenyl)methyl]-4,4-dimethyl-2-pyrrolidin-2-one or ADHP). The polypeptide is Mycofactocin precursor peptide peptidase (Mycobacterium ulcerans (strain Agy99)).